We begin with the raw amino-acid sequence, 30 residues long: Cliotide T6 (30 aa).

Positions 1–30 form a cross-link, cyclopeptide (Ser-Asn); that stretch reads SIPCGESCVYIPCITTIVGCSCKDKVCYKN. Cystine bridges form between C4–C20, C8–C22, and C13–C27.

In terms of processing, contains 3 disulfide bonds. This is a cyclic peptide. Expressed in pod but not in flower, stem, shoot, leaf, seed, root and nodule (at protein level).

Probably participates in a plant defense mechanism. The protein is Cliotide T6 of Clitoria ternatea (Butterfly pea).